We begin with the raw amino-acid sequence, 383 residues long: Outer membrane protein assembly factor BamB (383 aa).

The N-terminal stretch at 1-23 (MMLLKRCNRRALVALAAVLLLAA) is a signal peptide. Cys-24 is lipidated: N-palmitoyl cysteine. Cys-24 is lipidated: S-diacylglycerol cysteine.

This sequence belongs to the BamB family. In terms of assembly, part of the Bam complex.

The protein resides in the cell outer membrane. Its function is as follows. Part of the outer membrane protein assembly complex, which is involved in assembly and insertion of beta-barrel proteins into the outer membrane. This is Outer membrane protein assembly factor BamB from Alkalilimnicola ehrlichii (strain ATCC BAA-1101 / DSM 17681 / MLHE-1).